Here is a 154-residue protein sequence, read N- to C-terminus: Cytochrome c-type biogenesis protein CcmE (154 aa).

Residues 1-7 (MKPRQKR) are Cytoplasmic-facing. The helical; Signal-anchor for type II membrane protein transmembrane segment at 8–28 (LVLIVGIVAAVGVAAALVLNA) threads the bilayer. The Periplasmic portion of the chain corresponds to 29 to 154 (FQSNLVFFYS…GETVVKETRP (126 aa)). Heme-binding residues include H121 and Y125. Residues 131–154 (AEALQRAGASNQKLGETVVKETRP) are disordered.

It belongs to the CcmE/CycJ family.

It is found in the cell inner membrane. Heme chaperone required for the biogenesis of c-type cytochromes. Transiently binds heme delivered by CcmC and transfers the heme to apo-cytochromes in a process facilitated by CcmF and CcmH. The sequence is that of Cytochrome c-type biogenesis protein CcmE from Methylibium petroleiphilum (strain ATCC BAA-1232 / LMG 22953 / PM1).